The primary structure comprises 268 residues: 3-methyl-2-oxobutanoate hydroxymethyltransferase (268 aa).

Mg(2+)-binding residues include D44 and D83. 3-methyl-2-oxobutanoate contacts are provided by residues D44 to S45, D83, and K113. E115 lines the Mg(2+) pocket. The Proton acceptor role is filled by E183.

Belongs to the PanB family. In terms of assembly, homodecamer; pentamer of dimers. Mg(2+) is required as a cofactor.

It is found in the cytoplasm. The enzyme catalyses 3-methyl-2-oxobutanoate + (6R)-5,10-methylene-5,6,7,8-tetrahydrofolate + H2O = 2-dehydropantoate + (6S)-5,6,7,8-tetrahydrofolate. The protein operates within cofactor biosynthesis; (R)-pantothenate biosynthesis; (R)-pantoate from 3-methyl-2-oxobutanoate: step 1/2. Catalyzes the reversible reaction in which hydroxymethyl group from 5,10-methylenetetrahydrofolate is transferred onto alpha-ketoisovalerate to form ketopantoate. The protein is 3-methyl-2-oxobutanoate hydroxymethyltransferase of Leptospira biflexa serovar Patoc (strain Patoc 1 / Ames).